The chain runs to 254 residues: Sugar fermentation stimulation protein homolog (254 aa).

Belongs to the SfsA family.

The protein is Sugar fermentation stimulation protein homolog of Synechococcus sp. (strain CC9605).